A 363-amino-acid polypeptide reads, in one-letter code: Anhydro-N-acetylmuramic acid kinase (363 aa).

Residue 10 to 17 (GTSLDGLD) participates in ATP binding.

It belongs to the anhydro-N-acetylmuramic acid kinase family.

It carries out the reaction 1,6-anhydro-N-acetyl-beta-muramate + ATP + H2O = N-acetyl-D-muramate 6-phosphate + ADP + H(+). It participates in amino-sugar metabolism; 1,6-anhydro-N-acetylmuramate degradation. The protein operates within cell wall biogenesis; peptidoglycan recycling. Its function is as follows. Catalyzes the specific phosphorylation of 1,6-anhydro-N-acetylmuramic acid (anhMurNAc) with the simultaneous cleavage of the 1,6-anhydro ring, generating MurNAc-6-P. Is required for the utilization of anhMurNAc either imported from the medium or derived from its own cell wall murein, and thus plays a role in cell wall recycling. This is Anhydro-N-acetylmuramic acid kinase from Pseudomonas fluorescens (strain Pf0-1).